Here is a 413-residue protein sequence, read N- to C-terminus: Arginine biosynthesis bifunctional protein ArgJ, mitochondrial (413 aa).

The substrate site is built by threonine 168, lysine 194, threonine 205, and glutamate 292. Threonine 205 serves as the catalytic Nucleophile.

The protein belongs to the ArgJ family. Heterodimer of an alpha and a beta chain. In terms of processing, the alpha and beta chains are autoproteolytically processed from a single precursor protein within the mitochondrion.

It is found in the mitochondrion matrix. It catalyses the reaction N(2)-acetyl-L-ornithine + L-glutamate = N-acetyl-L-glutamate + L-ornithine. It carries out the reaction L-glutamate + acetyl-CoA = N-acetyl-L-glutamate + CoA + H(+). It functions in the pathway amino-acid biosynthesis; L-arginine biosynthesis; L-ornithine and N-acetyl-L-glutamate from L-glutamate and N(2)-acetyl-L-ornithine (cyclic): step 1/1. The protein operates within amino-acid biosynthesis; L-arginine biosynthesis; N(2)-acetyl-L-ornithine from L-glutamate: step 1/4. Functionally, catalyzes two activities which are involved in the cyclic version of arginine biosynthesis: the synthesis of acetylglutamate from glutamate and acetyl-CoA, and of ornithine by transacetylation between acetylornithine and glutamate. The chain is Arginine biosynthesis bifunctional protein ArgJ, mitochondrial from Clavispora lusitaniae (strain ATCC 42720) (Yeast).